The primary structure comprises 449 residues: G-protein coupled receptor 61 (449 aa).

Residues 1–14 (MESSPIPQSSGNSS) show a composition bias toward low complexity. The disordered stretch occupies residues 1 to 29 (MESSPIPQSSGNSSTLGRALQTPGPSTAS). Residues 1–44 (MESSPIPQSSGNSSTLGRALQTPGPSTASGVPELGLRDVASESV) are Extracellular-facing. A glycan (N-linked (GlcNAc...) asparagine) is linked at asparagine 12. A helical transmembrane segment spans residues 45–67 (ALFFMLLLDLTAVAGNAAVMAVI). Residues 68-75 (AKTPALRK) lie on the Cytoplasmic side of the membrane. The chain crosses the membrane as a helical span at residues 76 to 98 (FVFVFHLCLVDLLAALTLMPLAM). Residues 99-112 (LSSSALFDHALFGE) are Extracellular-facing. Residues 113-135 (VACRLYLFLSVCFVSLAILSVSA) traverse the membrane as a helical segment. At 136-155 (INVERYYYVVHPMRYEVRMT) the chain is on the cytoplasmic side. Residues 156-178 (LGLVASVLVGVWVKALAMASVPV) form a helical membrane-spanning segment. The Extracellular segment spans residues 179-206 (LGRVYWEEGAPSVNPGCSLQWSHSAYCQ). Residues 207–229 (LFVVVFAVLYFLLPLILIFVVYC) traverse the membrane as a helical segment. Residues 230–287 (SMFRVARVAAMQHGPLPTWMETPRQRSESLSSRSTMVTSSGAHQTTPHRTFGGGKAAV) lie on the Cytoplasmic side of the membrane. The chain crosses the membrane as a helical span at residues 288–310 (VLLAVGGQFLLCWLPYFSFHLYV). Residues 311 to 324 (ALSAQPISAGQVEN) lie on the Extracellular side of the membrane. Residues 325–344 (VVTWIGYFCFTSNPFFYGCL) traverse the membrane as a helical segment. Residues 345–449 (NRQIRGELSK…RPAPSPRLES (105 aa)) lie on the Cytoplasmic side of the membrane.

The protein belongs to the G-protein coupled receptor 1 family. Forms heterodimer with MTNR1B. Interacts with ARRB1 and ARRB2 in a spontaneous and agonist-independent manner; leading to the internalization of GPR61 in the endosomal compartment. In terms of tissue distribution, predominantly expressed in the brain and testes, with relatively lower expression observed in the eye, adrenal gland and pituitary gland.

The protein localises to the cell membrane. The protein resides in the endosome membrane. Functionally, orphan G-protein coupled receptor. Constitutively activates the G(s)-alpha/cAMP signaling pathway. Shows a reciprocal regulatory interaction with the melatonin receptor MTNR1B most likely through receptor heteromerization. May be involved in the regulation of food intake and body weight. This is G-protein coupled receptor 61 (Gpr61) from Mus musculus (Mouse).